A 199-amino-acid polypeptide reads, in one-letter code: Inner membrane protein E199L (199 aa).

Asparagine 131 is a glycosylation site (N-linked (GlcNAc...) asparagine; by host). A helical membrane pass occupies residues 150–170 (INVMNHPFLTLILIILILVII).

Belongs to the asfivirus E199L family. Interacts with host PYCR2; this interaction results in autophagy activation.

The protein localises to the virion membrane. It localises to the host membrane. Functionally, essential for viral fusion with host endosomal membrane and core release. Not required for virus morphogenesis and egress. Induces complete autophagy through the interaction with and down-regulation of host PYCR2. This African swine fever virus (isolate Pig/Kenya/KEN-50/1950) (ASFV) protein is Inner membrane protein E199L.